A 173-amino-acid chain; its full sequence is Transcriptional repressor NrdR (173 aa).

A zinc finger spans residues 3–34 (CPFCQHADTRVIDSRVSEDGATIRRRRECEAC). An ATP-cone domain is found at 49–139 (PAIVKSDGTR…VYRSFEDVAD (91 aa)).

Belongs to the NrdR family. It depends on Zn(2+) as a cofactor.

Its function is as follows. Negatively regulates transcription of bacterial ribonucleotide reductase nrd genes and operons by binding to NrdR-boxes. This chain is Transcriptional repressor NrdR, found in Stenotrophomonas maltophilia (strain R551-3).